Reading from the N-terminus, the 350-residue chain is Proton-activated chloride channel (350 aa).

The interval 1-51 (MEAIRKELSRSYQELNDETDPIARDPEGAQEEEQEEAASAVVPDRDSDRSN) is disordered. Topologically, residues 1-63 (MEAIRKELSR…VHFSRTCLKN (63 aa)) are cytoplasmic. The helical transmembrane segment at 64-84 (VFSVLLIFVYLLLMGVAVFLV) threads the bilayer. The Extracellular portion of the chain corresponds to 85 to 297 (YQTITDFRDK…KDPYIQEIQD (213 aa)). Residues 298–318 (IITANPWSMIALLCSVFLVLF) traverse the membrane as a helical segment. Residues 319–350 (KAADFAKLSVKWMIKVRRRHLKKRTRELNHIS) lie on the Cytoplasmic side of the membrane.

This sequence belongs to the proton-activated chloride channel family.

Its subcellular location is the cell membrane. The catalysed reaction is chloride(in) = chloride(out). Functionally, chloride channel gated by pH that facilitates the entry of chloride ions into cells upon exposure to extracellular acidic pH. In Xenopus laevis (African clawed frog), this protein is Proton-activated chloride channel.